A 282-amino-acid chain; its full sequence is ATP synthase gamma chain (282 aa).

It belongs to the ATPase gamma chain family. As to quaternary structure, F-type ATPases have 2 components, CF(1) - the catalytic core - and CF(0) - the membrane proton channel. CF(1) has five subunits: alpha(3), beta(3), gamma(1), delta(1), epsilon(1). CF(0) has three main subunits: a, b and c.

The protein localises to the cell membrane. Produces ATP from ADP in the presence of a proton gradient across the membrane. The gamma chain is believed to be important in regulating ATPase activity and the flow of protons through the CF(0) complex. The chain is ATP synthase gamma chain from Clostridium botulinum (strain 657 / Type Ba4).